A 948-amino-acid polypeptide reads, in one-letter code: Alanine--tRNA ligase (948 aa).

Residues His638, His642, Cys739, and His743 each contribute to the Zn(2+) site.

The protein belongs to the class-II aminoacyl-tRNA synthetase family. The cofactor is Zn(2+).

Its subcellular location is the cytoplasm. It catalyses the reaction tRNA(Ala) + L-alanine + ATP = L-alanyl-tRNA(Ala) + AMP + diphosphate. Catalyzes the attachment of alanine to tRNA(Ala) in a two-step reaction: alanine is first activated by ATP to form Ala-AMP and then transferred to the acceptor end of tRNA(Ala). Also edits incorrectly charged Ser-tRNA(Ala) and Gly-tRNA(Ala) via its editing domain. The protein is Alanine--tRNA ligase of Paracidovorax citrulli (strain AAC00-1) (Acidovorax citrulli).